Here is an 89-residue protein sequence, read N- to C-terminus: Small ribosomal subunit protein uS15 (89 aa).

This sequence belongs to the universal ribosomal protein uS15 family. Part of the 30S ribosomal subunit. Forms a bridge to the 50S subunit in the 70S ribosome, contacting the 23S rRNA.

In terms of biological role, one of the primary rRNA binding proteins, it binds directly to 16S rRNA where it helps nucleate assembly of the platform of the 30S subunit by binding and bridging several RNA helices of the 16S rRNA. Functionally, forms an intersubunit bridge (bridge B4) with the 23S rRNA of the 50S subunit in the ribosome. This chain is Small ribosomal subunit protein uS15, found in Alcanivorax borkumensis (strain ATCC 700651 / DSM 11573 / NCIMB 13689 / SK2).